Here is a 138-residue protein sequence, read N- to C-terminus: Large ribosomal subunit protein uL16 (138 aa).

Basic residues predominate over residues 1 to 13; sequence MLQPKRRKYRKEQ. Residues 1–24 are disordered; that stretch reads MLQPKRRKYRKEQKGRNTGKATRG.

Belongs to the universal ribosomal protein uL16 family. As to quaternary structure, part of the 50S ribosomal subunit.

Its function is as follows. Binds 23S rRNA and is also seen to make contacts with the A and possibly P site tRNAs. This Burkholderia multivorans (strain ATCC 17616 / 249) protein is Large ribosomal subunit protein uL16.